The following is a 483-amino-acid chain: MLTLDTLNVMLAVSEEGLIEEMIIALLASPQLAVFFEKFPRLKAAITDDVPRWREALRSRLTDARVPPELTEEVMCYQQSQLLSTPQFIVQLPQILDLLHRLNSPWAEQARQLVDANSSITSALHTLFLQRWRLSLIVQATTLNQQLLEEEREQLLSEVQERMTLSGQLEPILADNNTGAGRLWDMSAGQLKRGDYQLIVKYGEFLNEQPELKRLAEQLGRSREAKSIPRNDAQMETFRTMVREPATVPEQVDGLQQSDDILRLLPPELATLGITELEYEFYRRLVEKQLLTYRLHGESLREKVIERPVVHKDYDEQPRGPFIVCVDTSGSMGGFNEQCAKAFCLALMRIALAENRRCYIMLFSTEIVRYELSGPQGIEQAIRFLNQQFRGGTDLASCFRAIMERLQSREWFDADAVVISDFIAQRLPDDVTSKVKELQRVHQHRFHAVAMSAHGKPGIMRIFDHIWRFDTGMRSRLLRRWRR.

This sequence belongs to the ViaA family. Homodimer. Interacts with RavA.

It is found in the cytoplasm. Component of the RavA-ViaA chaperone complex, which may act on the membrane to optimize the function of some of the respiratory chains. ViaA stimulates the ATPase activity of RavA. The chain is Regulatory protein ViaA from Shigella dysenteriae serotype 1 (strain Sd197).